We begin with the raw amino-acid sequence, 196 residues long: Putative NADH dehydrogenase/NAD(P)H nitroreductase SGR_2476 (196 aa).

It belongs to the nitroreductase family. HadB/RutE subfamily. FMN serves as cofactor.

The chain is Putative NADH dehydrogenase/NAD(P)H nitroreductase SGR_2476 from Streptomyces griseus subsp. griseus (strain JCM 4626 / CBS 651.72 / NBRC 13350 / KCC S-0626 / ISP 5235).